Consider the following 20-residue polypeptide: Bulb protein (20 aa).

A disordered region spans residues 1–20 (APDVHTRXTQNGLPPGXLPS).

The protein is Bulb protein of Narcissus pseudonarcissus (Daffodil).